A 757-amino-acid polypeptide reads, in one-letter code: Maltose phosphorylase (757 aa).

Position 354 to 355 (354 to 355 (WD)) interacts with substrate. Catalysis depends on E483, which acts as the Proton donor. 588 to 589 (KQ) is a binding site for substrate.

The protein belongs to the glycosyl hydrolase 65 family.

It carries out the reaction D-maltose + phosphate = beta-D-glucose 1-phosphate + D-glucose. The protein operates within glycan degradation; maltose degradation. Functionally, catalyzes the phosphorolysis of maltose, leading to the formation of glucose and glucose 1-P. The polypeptide is Maltose phosphorylase (mdxK) (Bacillus subtilis (strain 168)).